Here is a 130-residue protein sequence, read N- to C-terminus: Small ribosomal subunit protein uS9 (130 aa).

It belongs to the universal ribosomal protein uS9 family.

The chain is Small ribosomal subunit protein uS9 from Shewanella pealeana (strain ATCC 700345 / ANG-SQ1).